Here is a 430-residue protein sequence, read N- to C-terminus: Histidine--tRNA ligase (430 aa).

This sequence belongs to the class-II aminoacyl-tRNA synthetase family. Homodimer.

It is found in the cytoplasm. The catalysed reaction is tRNA(His) + L-histidine + ATP = L-histidyl-tRNA(His) + AMP + diphosphate + H(+). The sequence is that of Histidine--tRNA ligase from Acaryochloris marina (strain MBIC 11017).